Reading from the N-terminus, the 59-residue chain is Large ribosomal subunit protein uL30 (59 aa).

It belongs to the universal ribosomal protein uL30 family. In terms of assembly, part of the 50S ribosomal subunit.

The polypeptide is Large ribosomal subunit protein uL30 (Enterococcus faecalis (strain ATCC 700802 / V583)).